A 563-amino-acid chain; its full sequence is Beta-catenin-like protein 1 (563 aa).

Position 1 is an N-acetylmethionine (Met-1). The tract at residues 1–81 is disordered; that stretch reads MDVGELLSYQ…EEEEPLDESS (81 aa). Positions 16-33 match the Nuclear localization signal motif; that stretch reads KRPRDDEEEELKTRRKQT. Over residues 34–45 the composition is skewed to basic and acidic residues; the sequence is GPRERGRYREDE. Acidic residues predominate over residues 66 to 78; that stretch reads DGEEEEEEEEPLD. HEAT repeat units follow at residues 79 to 129 and 134 to 176; these read ESSV…VVAT and YHLL…TLHE. Position 91 is an N6-acetyllysine (Lys-91). The Nuclear export signal (NES) motif lies at 130 to 140; it reads MPDLYHLLVEL. ARM repeat units follow at residues 178–228, 229–273, 274–323, 325–363, and 364–417; these read EEGA…MAEF, RPEM…LQDN, DENR…CLML, SNRE…AMIG, and PEGA…LLRN. Phosphoserine is present on Ser-389. Positions 476–540 form a coiled coil; it reads DMEDEFYLRR…HIIKEYAENI (65 aa). Ser-545 bears the Phosphoserine mark.

Component of the PRP19-CDC5L splicing complex composed of a core complex comprising a homotetramer of PRPF19, CDC5L, PLRG1 and BCAS2, and at least three less stably associated proteins CTNNBL1, CWC15 and HSPA8. Interacts directly with CWC15 and CDC5L in the complex. Interacts with AICDA; the interaction is important for the antibody diversification activity of AICDA. Interacts with PRPF31 (via its NLS). Interacts (via its N-terminal NLS) with KPNA1 and KPNA2.

The protein resides in the nucleus. In terms of biological role, component of the PRP19-CDC5L complex that forms an integral part of the spliceosome and is required for activating pre-mRNA splicing. Participates in AID/AICDA-mediated somatic hypermutation (SHM) and class-switch recombination (CSR), 2 processes resulting in the production of high-affinity, mutated isotype-switched antibodies. The chain is Beta-catenin-like protein 1 (Ctnnbl1) from Rattus norvegicus (Rat).